Consider the following 1762-residue polypeptide: ADAMTS-like protein 1 (1762 aa).

A signal peptide spans 1–28; sequence MECCRRATPGTLLLFLAFLLLSSRTARS. The region spanning 33–82 is the TSP type-1 1 domain; it reads DGLWDAWGPWSECSRTCGGGASYSLRRCLSSKSCEGRNIRYRTCSNVDCP. 2 C-linked (Man) tryptophan glycosylation sites follow: Trp-39 and Trp-42. Intrachain disulfides connect Cys-45-Cys-76, Cys-49-Cys-81, and Cys-60-Cys-66. A glycan (O-linked (Fuc...) threonine) is linked at Thr-48. Asn-251 is a glycosylation site (N-linked (GlcNAc...) asparagine). An O-linked (Fuc...) threonine glycan is attached at Thr-312. 6 consecutive TSP type-1 domains span residues 376-424, 436-493, 522-584, 607-665, 666-729, and 788-850; these read PLPR…MYTP, DCPK…TPCY, EEPS…GPCS, ELYD…NLDP, CPAR…FNCP, and CPSE…ATCA. The O-linked (Fuc...) serine glycan is linked to Ser-391. Thr-451 carries an O-linked (Fuc...) threonine glycan. Cystine bridges form between Cys-534/Cys-578, Cys-538/Cys-583, and Cys-549/Cys-567. Intrachain disulfides connect Cys-678–Cys-723, Cys-682–Cys-728, Cys-693–Cys-712, Cys-800–Cys-844, Cys-804–Cys-849, Cys-815–Cys-832, and Cys-899–Cys-947. One can recognise an Ig-like C2-type 1 domain in the interval 861–963; that stretch reads PHIAAARKVY…EHFVIKLIGG (103 aa). The tract at residues 1120-1164 is disordered; the sequence is LKPSERRTSPVTLSPHKHVSGFSSSLRTSSTGDAGGGSRRPHRKP. The span at 1139–1151 shows a compositional bias: low complexity; it reads SGFSSSLRTSSTG. 3 consecutive Ig-like C2-type domains span residues 1164–1266, 1286–1369, and 1395–1485; these read PTIL…IAVT, PAVT…TQLL, and PSVL…ASLV. Disulfide bonds link Cys-1202/Cys-1250, Cys-1308/Cys-1353, and Cys-1418/Cys-1469. 2 consecutive TSP type-1 domains span residues 1545–1608 and 1666–1726; these read CPSR…QLCV and CSVH…TPCE. The 37-residue stretch at 1726-1762 folds into the PLAC domain; sequence ENMECRDTTRYCEKVKQLKLCQLSQFKSRCCGTCGKA.

In terms of assembly, monomer. Post-translationally, C-, N- and O-glycosylated. O-fucosylated by POFUT2 on a serine or a threonine residue found within the consensus sequence C1-X(2)-(S/T)-C2-G of the TSP type-1 repeat domains where C1 and C2 are the first and second cysteine residue of the repeat, respectively. Fucosylated repeats can then be further glycosylated by the addition of a beta-1,3-glucose residue by the glucosyltransferase, B3GALTL. Fucosylation mediates the efficient secretion of ADAMTSL1. Can also be C-glycosylated with one or two mannose molecules on tryptophan residues within the consensus sequence W-X-X-W of the TPRs, and N-glycosylated. These other glycosylations can also facilitate secretion. In terms of processing, disulfide bonds are present. Expressed primarily in adult skeletal muscle.

It localises to the secreted. Its subcellular location is the extracellular space. The protein localises to the extracellular matrix. This is ADAMTS-like protein 1 (ADAMTSL1) from Homo sapiens (Human).